The sequence spans 371 residues: Maltose/maltodextrin import ATP-binding protein MalK (371 aa).

Residues 4–234 (VTLKNVCKAY…PENRFVAGFI (231 aa)) enclose the ABC transporter domain. 36–43 (GPSGCGKS) is an ATP binding site.

It belongs to the ABC transporter superfamily. Maltooligosaccharide importer (TC 3.A.1.1.1) family. As to quaternary structure, the complex is composed of two ATP-binding proteins (MalK), two transmembrane proteins (MalG and MalK) and a solute-binding protein (MalE).

It is found in the cell inner membrane. The enzyme catalyses D-maltose(out) + ATP + H2O = D-maltose(in) + ADP + phosphate + H(+). Part of the ABC transporter complex MalEFGK involved in maltose/maltodextrin import. Responsible for energy coupling to the transport system. This chain is Maltose/maltodextrin import ATP-binding protein MalK, found in Vibrio vulnificus (strain CMCP6).